We begin with the raw amino-acid sequence, 313 residues long: MTLPSNNSTSPVFEFFLICFPSFQSWQHWLSLPLSLLFLLAMGANATLLITIYLEASLHQPLYYLLSLLSLLDIVLCLTVIPKVLAIFWFDLRSISFPACFLQVFIMNSFLTMESCTFMIMAYDRYVAICKPLQYSSIITDQFVARAAIFVVARNGLLTMPIPILSSRLRYCAGHIIKNCICTNVSVSKLSCDDITLNQSYQFVIGWTLLGSDLILIVLSYFFILKTVLRIKGEGDMAKALGTCGSHFILILFFTTVLLVLVITNLARKRIPPDVPILLNILHHLIPPALNPIVYGVRTKEIKQGIQNLLRRL.

Residues 1–33 (MTLPSNNSTSPVFEFFLICFPSFQSWQHWLSLP) lie on the Extracellular side of the membrane. N-linked (GlcNAc...) asparagine glycosylation is found at Asn6 and Asn7. The helical transmembrane segment at 34–54 (LSLLFLLAMGANATLLITIYL) threads the bilayer. The Cytoplasmic segment spans residues 55-67 (EASLHQPLYYLLS). A helical transmembrane segment spans residues 68–88 (LLSLLDIVLCLTVIPKVLAIF). At 89–100 (WFDLRSISFPAC) the chain is on the extracellular side. Residues Cys100 and Cys182 are joined by a disulfide bond. The helical transmembrane segment at 101 to 121 (FLQVFIMNSFLTMESCTFMIM) threads the bilayer. The Cytoplasmic segment spans residues 122–146 (AYDRYVAICKPLQYSSIITDQFVAR). Residues 147-167 (AAIFVVARNGLLTMPIPILSS) traverse the membrane as a helical segment. Residues 168-203 (RLRYCAGHIIKNCICTNVSVSKLSCDDITLNQSYQF) lie on the Extracellular side of the membrane. 2 N-linked (GlcNAc...) asparagine glycosylation sites follow: Asn184 and Asn198. A helical transmembrane segment spans residues 204–224 (VIGWTLLGSDLILIVLSYFFI). Residues 225–246 (LKTVLRIKGEGDMAKALGTCGS) lie on the Cytoplasmic side of the membrane. A helical membrane pass occupies residues 247–267 (HFILILFFTTVLLVLVITNLA). Over 268 to 276 (RKRIPPDVP) the chain is Extracellular. The chain crosses the membrane as a helical span at residues 277–297 (ILLNILHHLIPPALNPIVYGV). Over 298-313 (RTKEIKQGIQNLLRRL) the chain is Cytoplasmic.

The protein belongs to the G-protein coupled receptor 1 family.

The protein resides in the cell membrane. In terms of biological role, odorant receptor. In Homo sapiens (Human), this protein is Olfactory receptor 56A5 (OR56A5).